The chain runs to 309 residues: Tagatose-6-phosphate kinase (309 aa).

The protein belongs to the carbohydrate kinase PfkB family. LacC subfamily.

The catalysed reaction is D-tagatofuranose 6-phosphate + ATP = D-tagatofuranose 1,6-bisphosphate + ADP + H(+). Its pathway is carbohydrate metabolism; D-tagatose 6-phosphate degradation; D-glyceraldehyde 3-phosphate and glycerone phosphate from D-tagatose 6-phosphate: step 1/2. The sequence is that of Tagatose-6-phosphate kinase from Streptococcus pneumoniae serotype 19F (strain G54).